Reading from the N-terminus, the 118-residue chain is Heavy metal-associated isoprenylated plant protein 47 (118 aa).

In terms of domain architecture, HMA spans 1-67 (MRIKLSVNSE…KACHVTLETL (67 aa)). C115 bears the Cysteine methyl ester mark. The S-farnesyl cysteine moiety is linked to residue C115. Residues 116 to 118 (LVM) constitute a propeptide, removed in mature form.

The protein belongs to the HIPP family.

Functionally, heavy-metal-binding protein. The chain is Heavy metal-associated isoprenylated plant protein 47 from Arabidopsis thaliana (Mouse-ear cress).